The chain runs to 413 residues: Gamma-glutamyl phosphate reductase (413 aa).

Belongs to the gamma-glutamyl phosphate reductase family.

The protein localises to the cytoplasm. The enzyme catalyses L-glutamate 5-semialdehyde + phosphate + NADP(+) = L-glutamyl 5-phosphate + NADPH + H(+). Its pathway is amino-acid biosynthesis; L-proline biosynthesis; L-glutamate 5-semialdehyde from L-glutamate: step 2/2. Functionally, catalyzes the NADPH-dependent reduction of L-glutamate 5-phosphate into L-glutamate 5-semialdehyde and phosphate. The product spontaneously undergoes cyclization to form 1-pyrroline-5-carboxylate. This Salinispora arenicola (strain CNS-205) protein is Gamma-glutamyl phosphate reductase.